Consider the following 206-residue polypeptide: GTP cyclohydrolase 1 (206 aa).

Positions Met-1 to Arg-17 are enriched in basic and acidic residues. The segment at Met-1–Glu-23 is disordered. Zn(2+) is bound by residues Cys-95, His-98, and Cys-166.

The protein belongs to the GTP cyclohydrolase I family. Toroid-shaped homodecamer, composed of two pentamers of five dimers.

It carries out the reaction GTP + H2O = 7,8-dihydroneopterin 3'-triphosphate + formate + H(+). It participates in cofactor biosynthesis; 7,8-dihydroneopterin triphosphate biosynthesis; 7,8-dihydroneopterin triphosphate from GTP: step 1/1. This is GTP cyclohydrolase 1 from Hyphomonas neptunium (strain ATCC 15444).